Here is a 1083-residue protein sequence, read N- to C-terminus: Carbamoyl phosphate synthase large chain (1083 aa).

Residues 1–402 (MPRRDDIKKI…SFQKALRGLE (402 aa)) form a carboxyphosphate synthetic domain region. R129, R169, G175, G176, E208, I210, E215, G241, V242, H243, Q285, and E299 together coordinate ATP. One can recognise an ATP-grasp 1 domain in the interval 133–328 (KQAMDKIGLD…IAKIAAKLAV (196 aa)). Residues Q285, E299, and N301 each contribute to the Mg(2+) site. Residues Q285, E299, and N301 each coordinate Mn(2+). Residues 403–557 (VGAFGFGSDP…YSTYESETEV (155 aa)) are oligomerization domain. The interval 558–944 (PAKGDKKRVV…AFAKSQLAAG (387 aa)) is carbamoyl phosphate synthetic domain. The region spanning 683–878 (SSLIDELGLR…VANLATKVMA (196 aa)) is the ATP-grasp 2 domain. ATP is bound by residues R719, R758, L760, E765, G790, V791, H792, S793, Q833, and E849. 3 residues coordinate Mg(2+): Q833, E849, and N851. Mn(2+) contacts are provided by Q833, E849, and N851. Positions 945 to 1083 (TVLPESGKIF…SLQRRYAQNV (139 aa)) constitute an MGS-like domain. The segment at 945-1083 (TVLPESGKIF…SLQRRYAQNV (139 aa)) is allosteric domain.

The protein belongs to the CarB family. As to quaternary structure, composed of two chains; the small (or glutamine) chain promotes the hydrolysis of glutamine to ammonia, which is used by the large (or ammonia) chain to synthesize carbamoyl phosphate. Tetramer of heterodimers (alpha,beta)4. The cofactor is Mg(2+). It depends on Mn(2+) as a cofactor.

The catalysed reaction is hydrogencarbonate + L-glutamine + 2 ATP + H2O = carbamoyl phosphate + L-glutamate + 2 ADP + phosphate + 2 H(+). The enzyme catalyses hydrogencarbonate + NH4(+) + 2 ATP = carbamoyl phosphate + 2 ADP + phosphate + 2 H(+). It functions in the pathway amino-acid biosynthesis; L-arginine biosynthesis; carbamoyl phosphate from bicarbonate: step 1/1. It participates in pyrimidine metabolism; UMP biosynthesis via de novo pathway; (S)-dihydroorotate from bicarbonate: step 1/3. Functionally, large subunit of the glutamine-dependent carbamoyl phosphate synthetase (CPSase). CPSase catalyzes the formation of carbamoyl phosphate from the ammonia moiety of glutamine, carbonate, and phosphate donated by ATP, constituting the first step of 2 biosynthetic pathways, one leading to arginine and/or urea and the other to pyrimidine nucleotides. The large subunit (synthetase) binds the substrates ammonia (free or transferred from glutamine from the small subunit), hydrogencarbonate and ATP and carries out an ATP-coupled ligase reaction, activating hydrogencarbonate by forming carboxy phosphate which reacts with ammonia to form carbamoyl phosphate. This Rhodopirellula baltica (strain DSM 10527 / NCIMB 13988 / SH1) protein is Carbamoyl phosphate synthase large chain.